The primary structure comprises 321 residues: Pectinesterase (321 aa).

An N-acetylthreonine modification is found at Thr1. Residue Asn75 is glycosylated (N-linked (GlcNAc...) (complex) asparagine). The substrate site is built by Thr84 and Gln114. Asp137 (proton donor) is an active-site residue. A disulfide bridge links Cys151 with Cys171. The active-site Nucleophile is the Asp158. Residues Arg226 and Trp228 each coordinate substrate. Asn275, Asn290, and Asn319 each carry an N-linked (GlcNAc...) (complex) asparagine glycan.

This sequence belongs to the pectinesterase family. In terms of processing, the N-glycans attached at Asn-75, Asn-275, Asn-290 and Asn-319 are complex oligosaccharides containing xylose, fucose, hexose and N-acetylglucosamine.

It carries out the reaction [(1-&gt;4)-alpha-D-galacturonosyl methyl ester](n) + n H2O = [(1-&gt;4)-alpha-D-galacturonosyl](n) + n methanol + n H(+). The protein operates within glycan metabolism; pectin degradation; 2-dehydro-3-deoxy-D-gluconate from pectin: step 1/5. Inhibited by PMEI. The chain is Pectinesterase from Actinidia deliciosa (Kiwi).